The primary structure comprises 119 residues: UPF0102 protein PM0647 (119 aa).

This sequence belongs to the UPF0102 family.

The chain is UPF0102 protein PM0647 from Pasteurella multocida (strain Pm70).